The sequence spans 101 residues: Large ribosomal subunit protein bL21 (101 aa).

Belongs to the bacterial ribosomal protein bL21 family. As to quaternary structure, part of the 50S ribosomal subunit. Contacts protein L20.

Its function is as follows. This protein binds to 23S rRNA in the presence of protein L20. This is Large ribosomal subunit protein bL21 from Beutenbergia cavernae (strain ATCC BAA-8 / DSM 12333 / CCUG 43141 / JCM 11478 / NBRC 16432 / NCIMB 13614 / HKI 0122).